The sequence spans 147 residues: Hemoglobin subunit beta (147 aa).

In terms of domain architecture, Globin spans 3–147; that stretch reads EWTDKERSII…VVSALGKQYH (145 aa). H64 and H93 together coordinate heme b.

It belongs to the globin family. In terms of assembly, hb1 is a heterotetramer of two alpha chains and two beta chains. Red blood cells.

Involved in oxygen transport from gills to the various peripheral tissues. This Trematomus bernacchii (Emerald rockcod) protein is Hemoglobin subunit beta (hbb).